The following is a 482-amino-acid chain: O-methyltransferase tpcA (482 aa).

S-adenosyl-L-methionine-binding positions include 293-294 (GG), D316, 348-349 (SF), and R364. H368 serves as the catalytic Proton acceptor.

The protein belongs to the class I-like SAM-binding methyltransferase superfamily. Cation-independent O-methyltransferase family. As to expression, specifically expressed in conidia.

The protein operates within secondary metabolite biosynthesis. Functionally, O-methyltransferase; part of the gene cluster that mediates the biosynthesis of trypacidin, a mycotoxin with antiprotozoal activity and that plays a role in the infection process. The pathway begins with the synthesis of atrochrysone thioester by the polyketide synthase (PKS) tpcC. The atrochrysone carboxyl ACP thioesterase tpcB then breaks the thioester bond and releases the atrochrysone carboxylic acid from tpcC. The decarboxylase tpcK converts atrochrysone carboxylic acid to atrochrysone which is further reduced into emodin anthrone. The next step is performed by the emodin anthrone oxygenase tpcL that catalyzes the oxidation of emodinanthrone to emodin. Emodin O-methyltransferase encoded by tpcA catalyzes methylation of the 8-hydroxy group of emodin to form questin. Ring cleavage of questin by questin oxidase tpcI leads to desmethylsulochrin via several intermediates including questin epoxide. Another methylation step catalyzed by tpcM leads to the formation of sulochrin which is further converted to monomethylsulfochrin by tpcH. Finally, the tpcJ catalyzes the conversion of monomethylsulfochrin to trypacidin. Trypacidin is toxic for human pulmonary and bronchial epithelial cells by initiating the intracellular formation of nitric oxide (NO) and hydrogen peroxide (H(2)O(2)), thus triggering host necrotic cell death. The trypacidin pathway is also able to produce endocrocin via a distinct route from the endocrocin Enc pathway. The chain is O-methyltransferase tpcA from Aspergillus fumigatus (strain ATCC MYA-4609 / CBS 101355 / FGSC A1100 / Af293) (Neosartorya fumigata).